Here is a 279-residue protein sequence, read N- to C-terminus: Ribosomal RNA small subunit methyltransferase J (279 aa).

S-adenosyl-L-methionine-binding positions include 138–139 and Asp-194; that span reads ER.

It belongs to the methyltransferase superfamily. RsmJ family.

It is found in the cytoplasm. It catalyses the reaction guanosine(1516) in 16S rRNA + S-adenosyl-L-methionine = N(2)-methylguanosine(1516) in 16S rRNA + S-adenosyl-L-homocysteine + H(+). Its function is as follows. Specifically methylates the guanosine in position 1516 of 16S rRNA. In Acinetobacter baumannii (strain SDF), this protein is Ribosomal RNA small subunit methyltransferase J.